We begin with the raw amino-acid sequence, 926 residues long: Serine/threonine-protein kinase/endoribonuclease IRE2 (926 aa).

An N-terminal signal peptide occupies residues 1-34; it reads MASAVRGSRPWPRLGLQLQFAALLLGTLSPQVHT. Residues 35–430 lie on the Lumenal side of the membrane; it reads LRPENLLLVS…TPDSYLGLGP (396 aa). A helical transmembrane segment spans residues 431–451; sequence QDLLAASLTAVLLGGWILFVM. The Cytoplasmic segment spans residues 452-926; that stretch reads RQQQPQVVEK…RRPCPGATGR (475 aa). Residues 478-501 are compositionally biased toward polar residues; sequence DAQSLHSGASRRSQKRLQSPSKQA. Positions 478–509 are disordered; the sequence is DAQSLHSGASRRSQKRLQSPSKQAQPLDDPEA. The Protein kinase domain maps to 520–781; it reads FNPKDVLGRG…APQVLAHPFF (262 aa). Residues 526-534 and K548 contribute to the ATP site; that span reads LGRGAGGTF. The active-site Proton acceptor is D637. The KEN domain occupies 784–912; it reads RAKQLQFFQD…ESLFLPYYPP (129 aa).

The protein belongs to the protein kinase superfamily. Ser/Thr protein kinase family. Mg(2+) serves as cofactor. Autophosphorylated.

It is found in the endoplasmic reticulum membrane. The catalysed reaction is L-seryl-[protein] + ATP = O-phospho-L-seryl-[protein] + ADP + H(+). The enzyme catalyses L-threonyl-[protein] + ATP = O-phospho-L-threonyl-[protein] + ADP + H(+). Its activity is regulated as follows. The kinase domain is activated by trans-autophosphorylation. Kinase activity is required for activation of the endoribonuclease domain. Induces translational repression through 28S ribosomal RNA cleavage in response to ER stress. Pro-apoptotic. Appears to play no role in the unfolded-protein response, unlike closely related proteins. The polypeptide is Serine/threonine-protein kinase/endoribonuclease IRE2 (Homo sapiens (Human)).